Reading from the N-terminus, the 229-residue chain is Extracellular endonuclease (229 aa).

A signal peptide spans 1-19 (MSARFIAVFCLFFTVTAHA). The disordered stretch occupies residues 69–95 (RADASNGNTSSRPGRSGISASAGKPVG). The segment covering 71 to 81 (DASNGNTSSRP) has biased composition (polar residues).

Belongs to the EndA/NucM nuclease family.

It is found in the secreted. This is Extracellular endonuclease (endX) from Pseudomonas fluorescens biotype A.